The chain runs to 906 residues: Inactive angiotensin-converting enzyme-related protein (906 aa).

Positions 1–19 (MKFHILLLLLVGACLPVFT) are cleaved as a signal peptide. Residues 28–95 (LLPADEAPKD…SPTPEPEPAI (68 aa)) form a disordered region. The span at 67–83 (PEPKPEPEPEPEPKPEP) shows a compositional bias: basic and acidic residues. The N-linked (GlcNAc...) asparagine glycan is linked to N159. One can recognise a Peptidase M2 domain in the interval 175–765 (IKDEEKLRSW…EIDQVVVGWD (591 aa)). A disulfide bridge connects residues C289 and C297. N653 carries an N-linked (GlcNAc...) asparagine glycan. A disordered region spans residues 862 to 882 (VTTPEPSAEPEPTAKTTTKMP). Positions 863–882 (TTPEPSAEPEPTAKTTTKMP) are enriched in low complexity.

This sequence belongs to the peptidase M2 family. In terms of tissue distribution, expressed in the hypodermis, in the vulva during organogenesis, and in the ray papillae of the male tail.

Functionally, inactive as a metallopeptidase, due to a lack of active site residues. Required for larval molting, male tail development, and formation of adult alae. Acts in the heterochronic pathway and plays a role in the developmental timing of postembryonic hypodermal seam cell division and adult alae production. Acts synergistically with apl-1 in let-7 regulated postembryonic cell division events. Might act downstream of the heterochronic protein lin-41. Negative regulator of lifespan, heat and oxidative stress response and age-related degenerative changes like reduced pharyngeal pumping and decreased body movements. Lifespan restriction is dependent on the forkhead-type transcription factor daf-16. The sequence is that of Inactive angiotensin-converting enzyme-related protein from Caenorhabditis elegans.